A 201-amino-acid polypeptide reads, in one-letter code: CASP-like protein 2A1 (201 aa).

A disordered region spans residues 1 to 27 (MEKRDKGSSPMATMMGSRDENEDVENT). At 1–30 (MEKRDKGSSPMATMMGSRDENEDVENTTRT) the chain is on the cytoplasmic side. A helical membrane pass occupies residues 31–51 (AETMLRLVPMALCVSALVVML). The Extracellular segment spans residues 52-72 (KNTQTNDYGSLSYSDLGAFRY). The helical transmembrane segment at 73–93 (LVHVNGICAGYSLLSAVIVAM) threads the bilayer. The Cytoplasmic portion of the chain corresponds to 94–101 (PRASTMPR). A helical membrane pass occupies residues 102-122 (AWAFFLLDQVLTYVILAAGTV). At 123–152 (STEVLYLASKGDTTITWSEACVSFGGFCHK) the chain is on the extracellular side. A helical transmembrane segment spans residues 153–173 (ALISIVITFVVVICYAALSLL). Residues 174 to 201 (SSYKLFSKYDSPVLTYPGKGIEIATFHG) are Cytoplasmic-facing.

This sequence belongs to the Casparian strip membrane proteins (CASP) family. In terms of assembly, homodimer and heterodimers.

It is found in the cell membrane. This Populus trichocarpa (Western balsam poplar) protein is CASP-like protein 2A1.